Here is a 423-residue protein sequence, read N- to C-terminus: Glutamyl-tRNA(Gln) amidotransferase subunit A (423 aa).

Active-site charge relay system residues include K28 and S103. Catalysis depends on S127, which acts as the Acyl-ester intermediate.

Belongs to the amidase family. GatA subfamily. In terms of assembly, heterotrimer of A, B and C subunits.

It carries out the reaction L-glutamyl-tRNA(Gln) + L-glutamine + ATP + H2O = L-glutaminyl-tRNA(Gln) + L-glutamate + ADP + phosphate + H(+). Functionally, allows the formation of correctly charged Gln-tRNA(Gln) through the transamidation of misacylated Glu-tRNA(Gln) in organisms which lack glutaminyl-tRNA synthetase. The reaction takes place in the presence of glutamine and ATP through an activated gamma-phospho-Glu-tRNA(Gln). The sequence is that of Glutamyl-tRNA(Gln) amidotransferase subunit A from Halobacterium salinarum (strain ATCC 700922 / JCM 11081 / NRC-1) (Halobacterium halobium).